The primary structure comprises 210 residues: MGQKVNPIGFRLGVIKTWDSKWYAEKDFAKLLHEDLKLKSFLKKRLYHSGVSKIEIERAAGKAKINIYTARPGLIIGKKGSEVETLKKELAKLTDKEVYLNIQEVRKPELDAQLVSENIALQLERRVAFRRAMKKSVTSSLKFGAKGIRITCSGRLGGAEMSRTEWYREGRVPLHTLRADIDYGFAEAKTTYGIIGVKVLIFKGEVLSGK.

The 69-residue stretch at leucine 38–arginine 106 folds into the KH type-2 domain.

This sequence belongs to the universal ribosomal protein uS3 family. In terms of assembly, part of the 30S ribosomal subunit. Forms a tight complex with proteins S10 and S14.

Functionally, binds the lower part of the 30S subunit head. Binds mRNA in the 70S ribosome, positioning it for translation. The protein is Small ribosomal subunit protein uS3 of Geotalea daltonii (strain DSM 22248 / JCM 15807 / FRC-32) (Geobacter daltonii).